Consider the following 532-residue polypeptide: Glucan synthesis regulatory protein (532 aa).

The segment at 374–532 (TANKRKSMAP…DAEDMKDIEI (159 aa)) is disordered. The segment covering 381 to 393 (MAPSMASASGMRS) has biased composition (low complexity). The segment covering 447–457 (PTTSLTASNAS) has biased composition (polar residues). Basic and acidic residues predominate over residues 475-516 (SGEHSKEDIKVNEDSPAKERTSEDKEKKPETEANGKATESKG).

Belongs to the KNR4/SMI1 family.

In terms of biological role, involved in the regulation of 1,3-beta-glucan synthase activity and cell-wall formation. The sequence is that of Glucan synthesis regulatory protein (cot-2) from Neurospora crassa (strain ATCC 24698 / 74-OR23-1A / CBS 708.71 / DSM 1257 / FGSC 987).